Reading from the N-terminus, the 342-residue chain is Isopentenyl-diphosphate delta-isomerase (342 aa).

11 to 12 (RK) contributes to the substrate binding site. Residues S68, 69–71 (SMT), S99, and N127 contribute to the FMN site. A substrate-binding site is contributed by 99–101 (SMR). Q162 is a binding site for substrate. Residue E163 coordinates Mg(2+). Residues K194, T224, 274 to 276 (GLK), and 295 to 296 (AG) each bind FMN.

Belongs to the IPP isomerase type 2 family. As to quaternary structure, homooctamer. Dimer of tetramers. FMN is required as a cofactor. It depends on NADPH as a cofactor. The cofactor is Mg(2+).

Its subcellular location is the cytoplasm. It carries out the reaction isopentenyl diphosphate = dimethylallyl diphosphate. Involved in the biosynthesis of isoprenoids. Catalyzes the 1,3-allylic rearrangement of the homoallylic substrate isopentenyl (IPP) to its allylic isomer, dimethylallyl diphosphate (DMAPP). The protein is Isopentenyl-diphosphate delta-isomerase of Rickettsia peacockii (strain Rustic).